Reading from the N-terminus, the 347-residue chain is NADH-ubiquinone oxidoreductase chain 2 (347 aa).

A run of 11 helical transmembrane segments spans residues 3 to 23 (PIIF…VMIS), 25 to 45 (HWLL…PIMM), 67 to 87 (SMLL…WTVM), 96 to 116 (MLMT…FWVP), 122 to 142 (IPLS…MSVL), 145 to 165 (IFPS…ILIG), 178 to 198 (IMAY…PYNP), 200 to 220 (MTLL…TMFM), 239 to 259 (IMTV…PLSG), 274 to 294 (NSII…YFYM), and 325 to 345 (FLPT…MLSV).

The protein belongs to the complex I subunit 2 family. Core subunit of respiratory chain NADH dehydrogenase (Complex I) which is composed of 45 different subunits. Interacts with TMEM242.

It localises to the mitochondrion inner membrane. The enzyme catalyses a ubiquinone + NADH + 5 H(+)(in) = a ubiquinol + NAD(+) + 4 H(+)(out). Core subunit of the mitochondrial membrane respiratory chain NADH dehydrogenase (Complex I) which catalyzes electron transfer from NADH through the respiratory chain, using ubiquinone as an electron acceptor. Essential for the catalytic activity and assembly of complex I. This chain is NADH-ubiquinone oxidoreductase chain 2, found in Bos indicus (Zebu).